A 611-amino-acid chain; its full sequence is Threonine--tRNA ligase (611 aa).

The catalytic stretch occupies residues 211–509 (DHRKLGTELE…LTEHYAGEFP (299 aa)). Residues cysteine 310, histidine 361, and histidine 486 each coordinate Zn(2+).

Belongs to the class-II aminoacyl-tRNA synthetase family. Homodimer. Requires Zn(2+) as cofactor.

The protein resides in the cytoplasm. It carries out the reaction tRNA(Thr) + L-threonine + ATP = L-threonyl-tRNA(Thr) + AMP + diphosphate + H(+). Catalyzes the attachment of threonine to tRNA(Thr) in a two-step reaction: L-threonine is first activated by ATP to form Thr-AMP and then transferred to the acceptor end of tRNA(Thr). Also edits incorrectly charged L-seryl-tRNA(Thr). The protein is Threonine--tRNA ligase of Nautilia profundicola (strain ATCC BAA-1463 / DSM 18972 / AmH).